Reading from the N-terminus, the 138-residue chain is Small ribosomal subunit protein bS6 (138 aa).

The segment at Val-94–Glu-138 is disordered. Basic and acidic residues predominate over residues Thr-106–Glu-138.

This sequence belongs to the bacterial ribosomal protein bS6 family.

Binds together with bS18 to 16S ribosomal RNA. The polypeptide is Small ribosomal subunit protein bS6 (Prochlorococcus marinus (strain NATL1A)).